The following is a 477-amino-acid chain: Ribulose bisphosphate carboxylase large chain (477 aa).

The propeptide occupies 1–2 (MS). P3 carries the N-acetylproline modification. Position 14 is an N6,N6,N6-trimethyllysine (K14). T173 serves as a coordination point for substrate. K175 functions as the Proton acceptor in the catalytic mechanism. K177 is a substrate binding site. Residues K201, D203, and E204 each coordinate Mg(2+). Position 201 is an N6-carboxylysine (K201). H294 serves as the catalytic Proton acceptor. Residues R295, H327, and S379 each coordinate substrate.

The protein belongs to the RuBisCO large chain family. Type I subfamily. As to quaternary structure, heterohexadecamer of 8 large chains and 8 small chains; disulfide-linked. The disulfide link is formed within the large subunit homodimers. The cofactor is Mg(2+). Post-translationally, the disulfide bond which can form in the large chain dimeric partners within the hexadecamer appears to be associated with oxidative stress and protein turnover.

It localises to the plastid. It is found in the chloroplast. The catalysed reaction is 2 (2R)-3-phosphoglycerate + 2 H(+) = D-ribulose 1,5-bisphosphate + CO2 + H2O. It carries out the reaction D-ribulose 1,5-bisphosphate + O2 = 2-phosphoglycolate + (2R)-3-phosphoglycerate + 2 H(+). RuBisCO catalyzes two reactions: the carboxylation of D-ribulose 1,5-bisphosphate, the primary event in carbon dioxide fixation, as well as the oxidative fragmentation of the pentose substrate in the photorespiration process. Both reactions occur simultaneously and in competition at the same active site. The sequence is that of Ribulose bisphosphate carboxylase large chain from Gerbera jamesonii (Transvaal daisy).